Reading from the N-terminus, the 223-residue chain is MTWSRRQFLTGVGVLAAVSGTAGRVVAKTLNINGVRYGMVHDESLCIGCTACMDACREVNKVPEGVSRLTIIRSEPQGEFPDVKYRFFRKSCQHCDHAPCVDVCPTGASFRDAASGIVDVNPDLCVGCQYCIAACPYRVRFIHPVTKTADKCDFCRKTNLQAGKLPACVEACPTKALTFGNLDDPNSEISQLLRQKPTYRYKLALGTKPKLYRVPFKYGEVSQ.

The segment at residues 1-27 (MTWSRRQFLTGVGVLAAVSGTAGRVVA) is a signal peptide (tat-type signal). 4Fe-4S ferredoxin-type domains lie at 37-65 (YGMV…VPEG), 83-114 (VKYR…RDAA), and 116-145 (GIVD…IHPV). Residues Cys46, Cys49, Cys52, Cys56, Cys92, Cys95, Cys100, Cys104, Cys125, Cys128, Cys131, Cys135, Cys152, Cys155, Cys168, and Cys172 each contribute to the [4Fe-4S] cluster site.

Predicted to be exported by the Tat system. The position of the signal peptide cleavage has not been experimentally proven.

Functionally, probably involved in the transfer of electrons from the quinone pool to the type-c cytochromes. This Escherichia coli O157:H7 protein is Protein NrfC (nrfC).